The following is a 192-amino-acid chain: UPF0149 protein YgfB (192 aa).

This sequence belongs to the UPF0149 family.

The protein is UPF0149 protein YgfB of Salmonella agona (strain SL483).